The following is a 425-amino-acid chain: Ribosome biogenesis protein WDR12 homolog (425 aa).

Residues 13–94 are ubiquitin-like (UBL) domain; sequence LQLHLITKQK…EDTVELEYVE (82 aa). WD repeat units lie at residues 106 to 143, 145 to 187, 194 to 233, 258 to 296, 298 to 337, 343 to 383, and 387 to 425; these read LHDD…KLTI, GHIA…NSVE, GHER…GGGD, GHRE…IKSE, SGNK…GTLV, GHTQ…APIF, and GHED…GGEK. The segment at 227–247 is disordered; it reads VRSGGGDSEPSTSKRQKLDQG.

This sequence belongs to the WD repeat WDR12/YTM1 family.

The protein resides in the nucleus. It is found in the nucleolus. It localises to the nucleoplasm. In terms of biological role, required for maturation of ribosomal RNAs and formation of the large ribosomal subunit. The protein is Ribosome biogenesis protein WDR12 homolog of Culex quinquefasciatus (Southern house mosquito).